We begin with the raw amino-acid sequence, 222 residues long: PKHD-type hydroxylase cce_3668 (222 aa).

The Fe2OG dioxygenase domain occupies 78 to 175; the sequence is HIHSLRFSRY…RLVVVGWVHS (98 aa). Fe cation-binding residues include His96, Asp98, and His156. Arg166 contributes to the 2-oxoglutarate binding site.

Fe(2+) serves as cofactor. It depends on L-ascorbate as a cofactor.

This Crocosphaera subtropica (strain ATCC 51142 / BH68) (Cyanothece sp. (strain ATCC 51142)) protein is PKHD-type hydroxylase cce_3668.